Consider the following 366-residue polypeptide: Carbamoyl phosphate synthase small chain (366 aa).

The interval 1–168 is CPSase; the sequence is MYGILVLEDG…KETVIYNAED (168 aa). The L-glutamine site is built by S45, G220, and G222. Residues 172–363 form the Glutamine amidotransferase type-1 domain; it reads RCVLIDCGVK…VELGIKFKAE (192 aa). Residue C247 is the Nucleophile of the active site. The L-glutamine site is built by L248, Q251, N289, G291, and F292. Residues H336 and E338 contribute to the active site.

The protein belongs to the CarA family. In terms of assembly, composed of two chains; the small (or glutamine) chain promotes the hydrolysis of glutamine to ammonia, which is used by the large (or ammonia) chain to synthesize carbamoyl phosphate. Tetramer of heterodimers (alpha,beta)4.

The catalysed reaction is hydrogencarbonate + L-glutamine + 2 ATP + H2O = carbamoyl phosphate + L-glutamate + 2 ADP + phosphate + 2 H(+). The enzyme catalyses L-glutamine + H2O = L-glutamate + NH4(+). It participates in amino-acid biosynthesis; L-arginine biosynthesis; carbamoyl phosphate from bicarbonate: step 1/1. The protein operates within pyrimidine metabolism; UMP biosynthesis via de novo pathway; (S)-dihydroorotate from bicarbonate: step 1/3. Functionally, small subunit of the glutamine-dependent carbamoyl phosphate synthetase (CPSase). CPSase catalyzes the formation of carbamoyl phosphate from the ammonia moiety of glutamine, carbonate, and phosphate donated by ATP, constituting the first step of 2 biosynthetic pathways, one leading to arginine and/or urea and the other to pyrimidine nucleotides. The small subunit (glutamine amidotransferase) binds and cleaves glutamine to supply the large subunit with the substrate ammonia. The chain is Carbamoyl phosphate synthase small chain from Methanococcus maripaludis (strain C5 / ATCC BAA-1333).